A 304-amino-acid polypeptide reads, in one-letter code: Protein YIF1B (304 aa).

Topologically, residues 1-146 (MMEYPNQSGF…APRFDINAPD (146 aa)) are cytoplasmic. A disordered region spans residues 21–54 (MRGSAMEPSDPTQLFDDTSSGVNKHEPGRVGKSP). The segment covering 30-42 (DPTQLFDDTSSGV) has biased composition (polar residues). A helical membrane pass occupies residues 147–167 (LYIPVMGFITYVLVAGLALGT). The Extracellular segment spans residues 168–182 (QNRFSPEILGIQASS). A helical membrane pass occupies residues 183–203 (ALVWLIIEVLAVLLSLYLVTV). Topologically, residues 204–212 (NTDLTTIDL) are cytoplasmic. A helical membrane pass occupies residues 213–233 (VAFSGYKYVGMIVGVVAGLLF). At 234–236 (GRT) the chain is on the extracellular side. A helical membrane pass occupies residues 237-257 (GYYLALLWFCASIFVFTIRTL). At 258-282 (RLKILSEAAAEGRLVRGTKNQLRMY) the chain is on the cytoplasmic side. Residues 283-303 (LTMAIAAAQPVFMYWLTFHLV) traverse the membrane as a helical segment. Residue Arg-304 is a topological domain, extracellular.

This sequence belongs to the YIF1 family.

The protein localises to the endoplasmic reticulum membrane. It is found in the golgi apparatus membrane. The protein resides in the endoplasmic reticulum-Golgi intermediate compartment membrane. Functions in endoplasmic reticulum to Golgi vesicle-mediated transport and regulates the proper organization of the endoplasmic reticulum and the Golgi. Plays a key role in targeting to neuronal dendrites receptors such as HTR1A. Plays also a role in primary cilium and sperm flagellum assembly probably through protein transport to these compartments. The polypeptide is Protein YIF1B (yif1b) (Danio rerio (Zebrafish)).